We begin with the raw amino-acid sequence, 428 residues long: Protein CLP1 homolog (428 aa).

ATP contacts are provided by residues glutamate 22, lysine 63, and 127–132 (DVGKST).

Belongs to the Clp1 family. Clp1 subfamily.

Its subcellular location is the nucleus. Functionally, required for endonucleolytic cleavage during polyadenylation-dependent pre-mRNA 3'-end formation. The chain is Protein CLP1 homolog from Nematostella vectensis (Starlet sea anemone).